The sequence spans 425 residues: Serine--tRNA ligase (425 aa).

Position 233–235 (233–235 (TAE)) interacts with L-serine. 264–266 (RRE) is an ATP binding site. L-serine is bound at residue Glu-287. 351–354 (EISS) is a binding site for ATP. Ser-385 contacts L-serine.

It belongs to the class-II aminoacyl-tRNA synthetase family. Type-1 seryl-tRNA synthetase subfamily. In terms of assembly, homodimer. The tRNA molecule binds across the dimer.

Its subcellular location is the cytoplasm. The enzyme catalyses tRNA(Ser) + L-serine + ATP = L-seryl-tRNA(Ser) + AMP + diphosphate + H(+). It carries out the reaction tRNA(Sec) + L-serine + ATP = L-seryl-tRNA(Sec) + AMP + diphosphate + H(+). It functions in the pathway aminoacyl-tRNA biosynthesis; selenocysteinyl-tRNA(Sec) biosynthesis; L-seryl-tRNA(Sec) from L-serine and tRNA(Sec): step 1/1. Its function is as follows. Catalyzes the attachment of serine to tRNA(Ser). Is also able to aminoacylate tRNA(Sec) with serine, to form the misacylated tRNA L-seryl-tRNA(Sec), which will be further converted into selenocysteinyl-tRNA(Sec). In Synechococcus sp. (strain CC9902), this protein is Serine--tRNA ligase.